A 1221-amino-acid polypeptide reads, in one-letter code: Coatomer subunit alpha (1221 aa).

WD repeat units lie at residues 7 to 46 (TKASRVKGLSFHPTRPWILASLHSGSIHLYDYRIKTLLEK), 49 to 88 (EHEGPVRGINFHMTQPLFVSGGDDYKIKVWNYKQRRCLFT), 91 to 130 (GHKDYIRSVEFHREAPWIVSSSDDMVIRIWNWQSRTCIAE), 133 to 172 (GHNHYVMSALFHPKDDLVVSASLDQTIRIWDISGLKKKMT), 202 to 241 (GHDRGVNWASFHPTQPYIVSASDDHQVKLWRMNDPIVDTF), 243 to 282 (GHYNNVSCALFHPRQDLIISNSEDKTIRVWDIIKKSTVHM), 285 to 323 (RDHDRFWTLASHPNQNLFAAGHDSGMIVFKLERERPLFV), 358 to 399 (PSNN…SNTV), and 528 to 567 (WDDNGVFIYSTSNHLKYLLQNGDNGTIRTLESTIYITGVK). Positions 820-885 (GVEQSTSTPT…DDGGWERDDL (66 aa)) are disordered. Residues 844–857 (SQQQSSQQQQQQQQ) show a composition bias toward low complexity. One copy of the WD 10 repeat lies at 910–953 (PQPGPSFSMIWARNSQFAVDHIAAGSFESAMNILNSQIGAVNFD).

Oligomeric complex that consists of at least the alpha, beta, beta', gamma, delta, epsilon and zeta subunits.

It localises to the cytoplasm. The protein resides in the golgi apparatus membrane. Functionally, the coatomer is a cytosolic protein complex that binds to dilysine motifs and reversibly associates with Golgi non-clathrin-coated vesicles, which further mediate biosynthetic protein transport from the ER, via the Golgi up to the trans Golgi network. Coatomer complex is required for budding from Golgi membranes, and is essential for the retrograde Golgi-to-ER transport of dilysine-tagged proteins. This chain is Coatomer subunit alpha (copa), found in Dictyostelium discoideum (Social amoeba).